The sequence spans 260 residues: Malonyl-[acyl-carrier protein] O-methyltransferase (260 aa).

Belongs to the methyltransferase superfamily.

The enzyme catalyses malonyl-[ACP] + S-adenosyl-L-methionine = malonyl-[ACP] methyl ester + S-adenosyl-L-homocysteine. It functions in the pathway cofactor biosynthesis; biotin biosynthesis. Functionally, converts the free carboxyl group of a malonyl-thioester to its methyl ester by transfer of a methyl group from S-adenosyl-L-methionine (SAM). It allows to synthesize pimeloyl-ACP via the fatty acid synthetic pathway. This is Malonyl-[acyl-carrier protein] O-methyltransferase from Haemophilus influenzae (strain ATCC 51907 / DSM 11121 / KW20 / Rd).